The sequence spans 207 residues: Holliday junction branch migration complex subunit RuvA (207 aa).

A domain I region spans residues 1–68 (MIGYLQGSLA…EDQWLLFGFL (68 aa)). A domain II region spans residues 69-147 (QMAERDLFRQ…EWREEAGLLP (79 aa)). A flexible linker region spans residues 148–158 (SATAAPIAAVQ). The domain III stretch occupies residues 158–207 (QEDVEMTLLALGYNNREILQALTAIAQENLVQSGQPAEDWIREAIAWLSR).

Belongs to the RuvA family. In terms of assembly, homotetramer. Forms an RuvA(8)-RuvB(12)-Holliday junction (HJ) complex. HJ DNA is sandwiched between 2 RuvA tetramers; dsDNA enters through RuvA and exits via RuvB. An RuvB hexamer assembles on each DNA strand where it exits the tetramer. Each RuvB hexamer is contacted by two RuvA subunits (via domain III) on 2 adjacent RuvB subunits; this complex drives branch migration. In the full resolvosome a probable DNA-RuvA(4)-RuvB(12)-RuvC(2) complex forms which resolves the HJ.

It localises to the cytoplasm. Functionally, the RuvA-RuvB-RuvC complex processes Holliday junction (HJ) DNA during genetic recombination and DNA repair, while the RuvA-RuvB complex plays an important role in the rescue of blocked DNA replication forks via replication fork reversal (RFR). RuvA specifically binds to HJ cruciform DNA, conferring on it an open structure. The RuvB hexamer acts as an ATP-dependent pump, pulling dsDNA into and through the RuvAB complex. HJ branch migration allows RuvC to scan DNA until it finds its consensus sequence, where it cleaves and resolves the cruciform DNA. The sequence is that of Holliday junction branch migration complex subunit RuvA from Synechococcus elongatus (strain ATCC 33912 / PCC 7942 / FACHB-805) (Anacystis nidulans R2).